The following is a 299-amino-acid chain: MAIGIIAEYNPFHNGHIYMINYIKNKFPNEEIIVFMSGKYTQRGEIAVASFETRKKYVLEAGVSKVYELPFETSTQAAHIFAQGAIKMLYEYNVDKLIFGSETNDIDLFYKIANTLKNNEQEYNLKLKEFLKQGLGFPNASSLALKSLVGYEIVMPNDILGLEYVKAIVNNNYNIQAYCLKRTINFHSEFTLENFASASYLRTLIYKSEDISKYSPMIFETIPDRIENYYEEFKQKVISTSKEELAKISLISEGLENRFKKIVLEAQDYDSFVNKANSKRYTSSRIKRIMLYILLDIKK.

ATP contacts are provided by residues isoleucine 6–methionine 19, glycine 100, asparagine 157, and arginine 182.

This sequence belongs to the TmcAL family.

It localises to the cytoplasm. It catalyses the reaction cytidine(34) in elongator tRNA(Met) + acetate + ATP = N(4)-acetylcytidine(34) in elongator tRNA(Met) + AMP + diphosphate. In terms of biological role, catalyzes the formation of N(4)-acetylcytidine (ac(4)C) at the wobble position of elongator tRNA(Met), using acetate and ATP as substrates. First activates an acetate ion to form acetyladenylate (Ac-AMP) and then transfers the acetyl group to tRNA to form ac(4)C34. The polypeptide is tRNA(Met) cytidine acetate ligase (Mycoplasma mobile (strain ATCC 43663 / 163K / NCTC 11711) (Mesomycoplasma mobile)).